Here is a 294-residue protein sequence, read N- to C-terminus: 4-hydroxy-tetrahydrodipicolinate synthase (294 aa).

Pyruvate is bound at residue T47. Y135 acts as the Proton donor/acceptor in catalysis. The active-site Schiff-base intermediate with substrate is the K163. Residue V205 coordinates pyruvate.

This sequence belongs to the DapA family. Homotetramer; dimer of dimers.

The protein resides in the cytoplasm. The enzyme catalyses L-aspartate 4-semialdehyde + pyruvate = (2S,4S)-4-hydroxy-2,3,4,5-tetrahydrodipicolinate + H2O + H(+). It functions in the pathway amino-acid biosynthesis; L-lysine biosynthesis via DAP pathway; (S)-tetrahydrodipicolinate from L-aspartate: step 3/4. In terms of biological role, catalyzes the condensation of (S)-aspartate-beta-semialdehyde [(S)-ASA] and pyruvate to 4-hydroxy-tetrahydrodipicolinate (HTPA). The chain is 4-hydroxy-tetrahydrodipicolinate synthase from Rickettsia bellii (strain RML369-C).